The chain runs to 193 residues: Large ribosomal subunit protein eL18 (193 aa).

The interval 158-193 (HFGAAGVPGSHAKPFTSNRGKERQRSSARRRAFRHK) is disordered. Over residues 183 to 193 (SSARRRAFRHK) the composition is skewed to basic residues.

It belongs to the eukaryotic ribosomal protein eL18 family.

It localises to the cytoplasm. The polypeptide is Large ribosomal subunit protein eL18 (RPL18) (Trypanosoma cruzi (strain CL Brener)).